We begin with the raw amino-acid sequence, 80 residues long: Serine palmitoyltransferase small subunit A-A (80 aa).

Residues 1-21 (MKVLCEDVNGPRSSLGRAWSH) lie on the Cytoplasmic side of the membrane. Residues 22–38 (MSWLYYQYLLVTALYML) traverse the membrane as a helical segment. At 39–43 (EPWER) the chain is on the lumenal side. The helical transmembrane segment at 44–66 (TVFNSMLVSIVGMALYTGYIFMP) threads the bilayer. Over 67–80 (QHILAILHYFEIVQ) the chain is Cytoplasmic.

This sequence belongs to the SPTSS family. SPTSSA subfamily. As to quaternary structure, component of the serine palmitoyltransferase (SPT) complex, which is composed of SPTLC1, SPTLC2 or SPTLC3 and SPTSSA or SPTSSB. The heterodimer consisting of SPTLC1 and SPTLC2/SPTLC3 forms the catalytic core of the enzyme, while SPTSSA or SPTSSB subunits determine substrate specificity. SPT also interacts with ORMDL proteins, especially ORMDL3, which negatively regulate SPT activity in the presence of ceramides.

The protein localises to the endoplasmic reticulum membrane. It functions in the pathway lipid metabolism; sphingolipid metabolism. Component of the serine palmitoyltransferase multisubunit enzyme (SPT) that catalyzes the initial and rate-limiting step in sphingolipid biosynthesis by condensing L-serine and activated acyl-CoA (most commonly palmitoyl-CoA) to form long-chain bases. The SPT complex is composed of SPTLC1, SPTLC2 or SPTLC3 and SPTSSA or SPTSSB. Within this complex, the heterodimer consisting of SPTLC1 and SPTLC2/SPTLC3 forms the catalytic core. Within the SPT complex, SPTSSA stimulates the catalytic activity and plays a role in substrate specificity, which depends upon the overall complex composition. The SPTLC1-SPTLC2-SPTSSA complex shows a strong preference for C16-CoA substrate, while the SPTLC1-SPTLC3-SPTSSA isozyme uses both C14-CoA and C16-CoA as substrates, with a slight preference for C14-CoA. Independently of its action as a SPT component, may be involved in MBOAT7 localization to mitochondria-associated membranes, a membrane bridge between the endoplasmic reticulum and mitochondria, may hence affect MBOAT7-catalyzed incorporation of arachidonic acid into phosphatidylinositol. The chain is Serine palmitoyltransferase small subunit A-A (sptssa-a) from Xenopus laevis (African clawed frog).